A 207-amino-acid chain; its full sequence is GTP cyclohydrolase-2 (207 aa).

49–53 (RTHSE) serves as a coordination point for GTP. Cys54, Cys65, and Cys67 together coordinate Zn(2+). GTP-binding positions include Gln70, 92-94 (EGR), and Thr114. Asp126 (proton acceptor) is an active-site residue. Arg128 acts as the Nucleophile in catalysis. Thr149 and Lys154 together coordinate GTP.

Belongs to the GTP cyclohydrolase II family. Zn(2+) serves as cofactor.

It catalyses the reaction GTP + 4 H2O = 2,5-diamino-6-hydroxy-4-(5-phosphoribosylamino)-pyrimidine + formate + 2 phosphate + 3 H(+). It participates in cofactor biosynthesis; riboflavin biosynthesis; 5-amino-6-(D-ribitylamino)uracil from GTP: step 1/4. Catalyzes the conversion of GTP to 2,5-diamino-6-ribosylamino-4(3H)-pyrimidinone 5'-phosphate (DARP), formate and pyrophosphate. In Hahella chejuensis (strain KCTC 2396), this protein is GTP cyclohydrolase-2.